A 948-amino-acid chain; its full sequence is RNA polymerase-associated protein RapA (948 aa).

The 169-residue stretch at 164 to 332 (EVADRIAPRV…FARLRLLDPN (169 aa)) folds into the Helicase ATP-binding domain. 177-184 (DEVGLGKT) provides a ligand contact to ATP. A DEAH box motif is present at residues 278 to 281 (DEAH). The region spanning 473 to 627 (RVEWLIDTLK…TCPTGNALQH (155 aa)) is the Helicase C-terminal domain.

It belongs to the SNF2/RAD54 helicase family. RapA subfamily. As to quaternary structure, interacts with the RNAP. Has a higher affinity for the core RNAP than for the holoenzyme. Its ATPase activity is stimulated by binding to RNAP.

Transcription regulator that activates transcription by stimulating RNA polymerase (RNAP) recycling in case of stress conditions such as supercoiled DNA or high salt concentrations. Probably acts by releasing the RNAP, when it is trapped or immobilized on tightly supercoiled DNA. Does not activate transcription on linear DNA. Probably not involved in DNA repair. This is RNA polymerase-associated protein RapA from Pseudomonas syringae pv. tomato (strain ATCC BAA-871 / DC3000).